Here is a 310-residue protein sequence, read N- to C-terminus: MEKCTKSSSTMQVEPSFLQAENLILRLQMQHPTTENTAKRGQVMPALATTVMPVPYSLEHLTQFHGDPANCSEFLTQVTTYLTALQISNPANDAQIKLFFDYLSQQLESCGIISGPDKSTLLKQYENLILEFQQSFGKPTKQEINPLMNAKFDKGDNSSQQDPATFHLLAQNLICNETNQSGQFEKALADPNQDEESVTDMMDNLPDLITQCIQLDKKHSDRPELLQSETQLPLLASLIQHQALFSPTDPPPKKGPIQLREGQLPLTPAKRARQQETQLCLYCSQSGHFTRDCLAKRSRAPATTNNTAHQ.

A CCHC-type zinc finger spans residues 278 to 295 (QLCLYCSQSGHFTRDCLA).

Its function is as follows. Involved in cognitive function in the brain, possibly via the noradrenergic system. This is Retrotransposon Gag-like protein 4 from Homo sapiens (Human).